The chain runs to 197 residues: Recombination protein RecR (197 aa).

A C4-type zinc finger spans residues 56–71 (CKRCGSYAETEICNIC). The Toprim domain occupies 79 to 174 (HTFCVVEQPE…DVTRIAYGIT (96 aa)).

This sequence belongs to the RecR family.

Its function is as follows. May play a role in DNA repair. It seems to be involved in an RecBC-independent recombinational process of DNA repair. It may act with RecF and RecO. The protein is Recombination protein RecR of Leptospira borgpetersenii serovar Hardjo-bovis (strain JB197).